An 882-amino-acid polypeptide reads, in one-letter code: Homeobox-leucine zipper protein ROC3 (882 aa).

A disordered region spans residues aspartate 104–histidine 144. Residues aspartate 107 to proline 119 are compositionally biased toward basic and acidic residues. A compositionally biased stretch (basic residues) spans alanine 133–alanine 143. The homeobox DNA-binding region spans lysine 134–glutamine 193. A coiled-coil region spans residues isoleucine 200–arginine 263. One can recognise an START domain in the interval glutamine 340 to serine 584. Residues alanine 782 to asparagine 816 are compositionally biased toward low complexity. The interval alanine 782 to leucine 820 is disordered.

The protein belongs to the HD-ZIP homeobox family. Class IV subfamily.

The protein localises to the nucleus. In terms of biological role, probable transcription factor. The chain is Homeobox-leucine zipper protein ROC3 (ROC3) from Oryza sativa subsp. indica (Rice).